Consider the following 983-residue polypeptide: Nuclear factor NF-kappa-B p105 subunit (983 aa).

The RHD domain occupies 47-372 (PYLQIIEQPK…EVQRKRQKLM (326 aa)). An S-nitrosocysteine modification is found at cysteine 66. The residue at position 342 (serine 342) is a Phosphoserine; by PKA. Residues 365-370 (QRKRQK) carry the Nuclear localization signal motif. The interval 377-397 (DGYGGGSGAGGGGMFGGGGGG) is GRR. Residues 423–454 (KSNAGMKHELSNSTVKKDEESSDKQSDKWDTK) form a disordered region. Residues 428–454 (MKHELSNSTVKKDEESSDKQSDKWDTK) show a composition bias toward basic and acidic residues. 7 ANK repeats span residues 540-569 (NGDN…DMNY), 579-608 (LYQT…NVNL), 612-641 (HGNS…ASSM), 648-677 (EGLS…DVNA), 682-712 (SGRT…DVDS), 716-745 (DGTT…DPHV), and 769-799 (PGTT…AVSE). A Death domain is found at 804–891 (QGPLRELNES…EAIEVIQKAL (88 aa)). Serine 938 is subject to Phosphoserine.

Active NF-kappa-B is a heterodimer of an about 50 kDa DNA-binding subunit and the weak DNA-binding subunit p65. Two heterodimers might form a labile tetramer. In terms of processing, generation of the NF-kappa-B p50 (Nuclear factor NF-kappa-B p50 subunit) transcription factor takes place both cotranslationally and post-translationally via non-mutually exclusive mechanisms. A cotranslational processing allows the production of both p50 and p105 (Nuclear factor NF-kappa-B p105 subunit) from a single NFKB1 mRNA. While translation occurs, the particular unfolded structure after the GRR repeat region acts as a substrate for the proteasome, promoting degradation of the C-terminus. The GRR acts as a proteasomal 'stop signal', protecting the region upstream of the GRR from degradation and promoting generation of p50. It is unclear if limited proteasome degradation during cotranslational processing depends on ubiquitination. NF-kappa-B p50 is also generated post-translationally following ubiquitination by the KPC complex, leading to limited processing by the proteasome downstream of the GRR region, thereby generating p50. Post-translationally, phosphorylation at the C-terminus by IKBKB/IKKB acts as a signal for ubiquitination and promotes either complete degradation or processing to generate the NF-kappa-B p50 (Nuclear factor NF-kappa-B p50 subunit). Phosphorylation at Ser-938 are required for BTRC/BTRCP-mediated ubiquitination and proteolysis. Phosphorylation at Ser-938 is also required for ubiquitination by the KPC complex and limited processing to generate NF-kappa-B p50 (Nuclear factor NF-kappa-B p50 subunit). Polyubiquitinated at multiple Lys residues in the C-terminus. Polyubiquitinated by the SCF(FBXW11) and SCF(BTRC) complexes following phosphorylation at Ser-938, leading to its complete degradation. In contrast, polyubiquitination by the KPC complex following phosphorylation at Ser-938 leads to limited proteosomal processing and generation of the active NF-kappa-B p50 (Nuclear factor NF-kappa-B p50 subunit). In terms of processing, S-nitrosylation of Cys-66 affects DNA binding. Post-translationally, the covalent modification of cysteine by 15-deoxy-Delta12,14-prostaglandin-J2 is autocatalytic and reversible. It may occur as an alternative to other cysteine modifications, such as S-nitrosylation and S-palmitoylation.

Its subcellular location is the cytoplasm. It localises to the nucleus. Its function is as follows. P105 is the precursor of the active p50 subunit (Nuclear factor NF-kappa-B p50 subunit) of the nuclear factor NF-kappa-B. The precursor protein itself does not bind to DNA. Acts as a cytoplasmic retention of attached NF-kappa-B proteins by p105. Functionally, constitutes the active form, which associates with RELA/p65 to form the NF-kappa-B p65-p50 complex to form a transcription factor. Together with RELA/p65, binds to the kappa-B consensus sequence 5'-GGRNNYYCC-3', located in the enhancer region of genes involved in immune response and acute phase reactions. The chain is Nuclear factor NF-kappa-B p105 subunit (NFKB1) from Gallus gallus (Chicken).